The primary structure comprises 308 residues: Sulfate adenylyltransferase subunit 2 (308 aa).

This sequence belongs to the PAPS reductase family. CysD subfamily. In terms of assembly, heterodimer composed of CysD, the smaller subunit, and CysN.

The enzyme catalyses sulfate + ATP + H(+) = adenosine 5'-phosphosulfate + diphosphate. It participates in sulfur metabolism; hydrogen sulfide biosynthesis; sulfite from sulfate: step 1/3. Functionally, with CysN forms the ATP sulfurylase (ATPS) that catalyzes the adenylation of sulfate producing adenosine 5'-phosphosulfate (APS) and diphosphate, the first enzymatic step in sulfur assimilation pathway. APS synthesis involves the formation of a high-energy phosphoric-sulfuric acid anhydride bond driven by GTP hydrolysis by CysN coupled to ATP hydrolysis by CysD. In Chromobacterium violaceum (strain ATCC 12472 / DSM 30191 / JCM 1249 / CCUG 213 / NBRC 12614 / NCIMB 9131 / NCTC 9757 / MK), this protein is Sulfate adenylyltransferase subunit 2.